We begin with the raw amino-acid sequence, 635 residues long: Ankyrin repeat and SOCS box protein 2 (635 aa).

The tract at residues 8-16 is required for FLNA degradation; it reads RGSQCTIGQ. A UIM domain is found at 26 to 45; it reads SEDELVQMAIEQSLADKTRG. ANK repeat units lie at residues 104–133, 137–167, 171–200, 204–233, 237–266, 270–299, 303–332, 336–365, 368–397, 410–439, 440–469, and 476–504; these read APADPLIKAIKDGDEEALKTMIKEGKNLAE, EGWLPLHEAAYYGQVGCLKVLQRAYPGTIDQ, QEETAVYLATCRGHLDCLLSLLQAGAEPDI, SRETPLYKACERKNAEAVKILVQHNADTNH, RGWTALHESVSRNDLEVMQILVSGGAKVES, YGITPLFVAAQSGQLEALRFLAKYGADINT, DNASALYEACKNEHEEVVEFLLSQGADANK, DGLLPLHIASKKGNYRIVQMLLPVTSRTRI, SGVSPLHLAAERNHDEVLEALLSARFDVNT, RRSSALYFAVVNNNVYATELLLQHGADPNR, DVISPLLVAIRHGCLRTMQLLLDHGANIDA, and TAFPATIMFAMKCLSLLKFLMDLGCDGEP. Ser-371 is modified (phosphoserine; by MAPK). Positions 586–635 constitute an SOCS box domain; sequence IKEKAEPPRPLAHLCRLRVRKAIGKYRIKLLDTLPLPGRLIRYLKYENTQ.

Belongs to the ankyrin SOCS box (ASB) family. In terms of assembly, component of a probable ECS E3 ubiquitin-protein ligase complex which contains CUL5, either RBX1 or RNF7/RBX2, Elongin BC complex (ELOB and ELOC) and ASB2. Interacts with SKP2. Through its interaction with SKP2, likely to bridge the formation of dimeric E3-ubiquitin-protein ligase complexes composed of an ECS complex and an SCF(SKP2) complex. Interacts with JAK2; the interaction targets JAK2 for Notch-mediated proteasomal degradation. Interacts with TCF3/E2A; the interaction is mediated by SKP2 and targets TCF3 for Notch-mediated proteasomal degradation. Interacts with DES. Monoubiquitinated. Post-translationally, not monoubiquitinated. In terms of processing, phosphorylation at Ser-371 is required for association with FLNA and subsequent FLNA degradation. Expressed in muscle cells. In terms of tissue distribution, expressed in hematopoietic cells.

It is found in the cytoplasm. The protein resides in the cytoskeleton. Its subcellular location is the stress fiber. The protein localises to the myofibril. It localises to the sarcomere. It is found in the z line. It functions in the pathway protein modification; protein ubiquitination. Its function is as follows. Substrate-recognition component of a SCF-like ECS (Elongin-Cullin-SOCS-box protein) E3 ubiquitin-protein ligase complex which mediates the ubiquitination and subsequent proteasomal degradation of target proteins. Mediates Notch-induced ubiquitination and degradation of substrates including TCF3/E2A and JAK2. Required during embryonic heart development for complete heart looping. Required for cardiomyocyte differentiation. Specifically promotes the ubiquitination of SMAD9 and targets it for proteasomal degradation, leading to avoid excessive accumulation of SMAD9. Plays a role in the regulation of NK-cell migration by modulating protein levels of filamin A/FLNA via regulation of its ubiquitination and proteasome degradation. In terms of biological role, involved in myogenic differentiation and targets filamin FLNB for proteasomal degradation but not filamin FLNA. Also targets DES for proteasomal degradation. Acts as a negative regulator of skeletal muscle mass. Targets filamins FLNA and FLNB for proteasomal degradation. This leads to enhanced adhesion of hematopoietic cells to fibronectin. Required for FLNA degradation in immature cardiomyocytes which is necessary for actin cytoskeleton remodeling, leading to proper organization of myofibrils and function of mature cardiomyocytes. Required for degradation of FLNA and FLNB in immature dendritic cells (DC) which enhances immature DC migration by promoting DC podosome formation and DC-mediated degradation of the extracellular matrix. Does not promote proteasomal degradation of tyrosine-protein kinases JAK1 or JAK2 in hematopoietic cells. In Homo sapiens (Human), this protein is Ankyrin repeat and SOCS box protein 2 (ASB2).